We begin with the raw amino-acid sequence, 364 residues long: DNA replication and repair protein RecF (364 aa).

An ATP-binding site is contributed by 30–37; it reads GNNGQGKT.

This sequence belongs to the RecF family.

It is found in the cytoplasm. In terms of biological role, the RecF protein is involved in DNA metabolism; it is required for DNA replication and normal SOS inducibility. RecF binds preferentially to single-stranded, linear DNA. It also seems to bind ATP. The sequence is that of DNA replication and repair protein RecF from Geotalea daltonii (strain DSM 22248 / JCM 15807 / FRC-32) (Geobacter daltonii).